The sequence spans 188 residues: MTLGITEVKKGMVLKVEGDLYSVVKTEFVNPGKGSAFIRTKLKNLTRNSSIERTFKAAEKLESVELEKRNMTICYTEGDDIIFMDSNDFEQMPVSKEYVEDILPFLKEETPMEVTFYEGKPIGVIPPNFSILEVTYAEEGLKGDTSGTAQKRITVETGGEINVPIFVKQGDVIKIDLRDLTYVERVSK.

This sequence belongs to the elongation factor P family.

The protein localises to the cytoplasm. It participates in protein biosynthesis; polypeptide chain elongation. Its function is as follows. Involved in peptide bond synthesis. Stimulates efficient translation and peptide-bond synthesis on native or reconstituted 70S ribosomes in vitro. Probably functions indirectly by altering the affinity of the ribosome for aminoacyl-tRNA, thus increasing their reactivity as acceptors for peptidyl transferase. This chain is Elongation factor P, found in Leptospira interrogans serogroup Icterohaemorrhagiae serovar copenhageni (strain Fiocruz L1-130).